A 292-amino-acid chain; its full sequence is Cytochrome c1, heme protein, mitochondrial (292 aa).

Residues 1-46 (MFRSFSTAAKQAVKGTYVQRAIVGGAAVVGIGASTMLYADSLTADA) constitute a mitochondrion transit peptide. Over 47 to 253 (MTAAEHGLHA…SEPEHDERKR (207 aa)) the chain is Mitochondrial intermembrane. Positions 73–226 (SSIRRGYQVY…DLVEYEDGTP (154 aa)) constitute a Cytochrome c domain. Heme c contacts are provided by Cys86, Cys89, and His90. The disordered stretch occupies residues 117–137 (FEYDDEPDDQGNPKKRPGKLA). Met210 lines the heme c pocket. The helical transmembrane segment at 254–272 (LGLKAMIVLSSLYLLSVWV) threads the bilayer. Topologically, residues 273–292 (KKFKWASIKSRKIVFNPPKK) are mitochondrial matrix.

This sequence belongs to the cytochrome c family. As to quaternary structure, component of the ubiquinol-cytochrome c oxidoreductase (cytochrome b-c1 complex, complex III, CIII), a multisubunit enzyme composed of 3 respiratory subunits cytochrome b, cytochrome c1 and Rieske protein, 2 core protein subunits, and additional low-molecular weight protein subunits. The complex exists as an obligatory dimer and forms supercomplexes (SCs) in the inner mitochondrial membrane with cytochrome c oxidase (complex IV, CIV). Heme c is required as a cofactor.

It localises to the mitochondrion inner membrane. The catalysed reaction is a quinol + 2 Fe(III)-[cytochrome c](out) = a quinone + 2 Fe(II)-[cytochrome c](out) + 2 H(+)(out). Component of the ubiquinol-cytochrome c oxidoreductase, a multisubunit transmembrane complex that is part of the mitochondrial electron transport chain which drives oxidative phosphorylation. The respiratory chain contains 3 multisubunit complexes succinate dehydrogenase (complex II, CII), ubiquinol-cytochrome c oxidoreductase (cytochrome b-c1 complex, complex III, CIII) and cytochrome c oxidase (complex IV, CIV), that cooperate to transfer electrons derived from NADH and succinate to molecular oxygen, creating an electrochemical gradient over the inner membrane that drives transmembrane transport and the ATP synthase. The cytochrome b-c1 complex catalyzes electron transfer from ubiquinol to cytochrome c, linking this redox reaction to translocation of protons across the mitochondrial inner membrane, with protons being carried across the membrane as hydrogens on the quinol. In the process called Q cycle, 2 protons are consumed from the matrix, 4 protons are released into the intermembrane space and 2 electrons are passed to cytochrome c. Cytochrome c1 is a catalytic core subunit containing a c-type heme. It transfers electrons from the [2Fe-2S] iron-sulfur cluster of the Rieske protein to cytochrome c. The sequence is that of Cytochrome c1, heme protein, mitochondrial (CYT1) from Kluyveromyces lactis (strain ATCC 8585 / CBS 2359 / DSM 70799 / NBRC 1267 / NRRL Y-1140 / WM37) (Yeast).